Consider the following 1332-residue polypeptide: MDFTQPKPATALCGVVSADGKIAYPPGVKEITDKITTDEMIKRLKMVVKTFMDMDQDSEDEKQQYLPLALHLASEFFLRNPNKDVRLLVACCLADIFRIYAPEAPYTSHDKLKDIFLFITRQLKGLEDTKSPQFNRYFYLLENLAWVKSYNICFELEDCNEIFIQLFRTLFSVINNSHNTKVQMHMLDLMSSIIMEGDGVTQELLDSILINLIPAHKNLNKQSFDLAKVLLKRTVQTIEACIANFFNQVLVLGRSSVSDLSEHVFDLIQELFAIDPQLLLSVMPQLEFKLKSNDGEERLAVVRLLAKLFGSKDSDLATQNRPLWQCFLGRFNDIHVPVRLESVKFASHCLMNHPDLAKDLTEYLKVRSHDPEEAIRHDVIVTIITAAKRDLALVNDQLLGFVRERTLDKRWRVRKEAMMGLAQLYKKYCLHGEAGKEAAEKVSWIKDKLLHIYYQNSIDDKLLVEKIFAQYLVPHNLETEERMKCLYYLYASLDPNAVKALNEMWKCQNMLRSHVRELLDLHKQPTSEANCSAMFGKLMTIAKNLPDPGKAQDFVKKFNQVLGDDEKLRSQLELLISPTCSCKQADVCVREIARKLANPKQPTNPFLEMVKFLLERIAPVHIDSEAISALVKLMNKSIEGTADDEEEGVSPDSAIRSGLELLKVLSFTHPTSFHSAETYESLLQCLRMEDDKVAEAAIQIFRNTGHKIETDLPQIRSTLIPILHQKAKRGTPHQAKQAVHCIHAIFSNKEVQLAQIFEPLSRSLNADVPEQLITPLVSLGHISMLAPDQFASPMKSVVANFIVKDLLMNDRSTGEKNGKLWSPDEEVSPEVLAKVYLLRLLVRWLLGMKNNQSKSANSTLRLLSAMLVSEGDLTEQKRISKSDMSRLRLAAGSAIMKLAQEPCYHEIITPEQFQLCALVINDECYQVRQIFAQKLHKALVKLLLPLEYMAIFALCAKDPVKERRAHARQCLLKNISIRREYIKQNPMATEKLLSLLPEYVVPYMIHLLAHDPDFTRSQDVDQLRDIKECLWFMLEVLMTKNENNSHAFMKKMAENIKLTRDAQSPDESKTNEKLYTVCDVALCVINSKSALCNADSPKDPVLPMKFFTQPEKDFCNDKSYISEETRVLLLTGKPKPTGVLGTVNKPLSATGRKPYVRSAGTETGSNINANSELSPSAGSRSREQSSEASETGVSENEENPVRIISVTPVKNIDTVKNKEINSDQSTQGNISSDRGKKRIVTAAGAENIQKPDEKVDESGPPAPSKPRRGRRPKSESQGNATKNDDLNKPVSKGRKRAAGSQESLEAGNAKAPKLQDGAKKAVPAERQIDLQR.

Position 1 is an N-acetylmethionine (methionine 1). The stretch at 392-428 (ALVNDQLLGFVRERTLDKRWRVRKEAMMGLAQLYKKY) is one HEAT repeat. Phosphoserine is present on serine 1096. Positions 1138-1332 (GVLGTVNKPL…PAERQIDLQR (195 aa)) are disordered. At lysine 1145 the chain carries N6-acetyllysine. Over residues 1160 to 1173 (GTETGSNINANSEL) the composition is skewed to polar residues. Phosphoserine occurs at positions 1174 and 1194. The residue at position 1207 (threonine 1207) is a Phosphothreonine. The residue at position 1210 (lysine 1210) is an N6-acetyllysine. Residues 1222-1232 (SDQSTQGNISS) are compositionally biased toward polar residues. Lysine 1288 bears the N6-acetyllysine mark. Residue serine 1303 is modified to Phosphoserine. Positions 1316 to 1332 (DGAKKAVPAERQIDLQR) are enriched in basic and acidic residues.

The protein belongs to the PDS5 family. In terms of assembly, interacts with the cohesin complex. Interacts with WAPL (via FGF motifs) or CDCA5 (via the FGF motif); the interaction is direct, cohesin-dependent and competitive. Interacts with SMC3. Interacts with TP63.

It localises to the nucleus. Functionally, probable regulator of sister chromatid cohesion in mitosis which may stabilize cohesin complex association with chromatin. May couple sister chromatid cohesion during mitosis to DNA replication. Cohesion ensures that chromosome partitioning is accurate in both meiotic and mitotic cells and plays an important role in DNA repair. The chain is Sister chromatid cohesion protein PDS5 homolog A (Pds5a) from Mus musculus (Mouse).